Here is a 282-residue protein sequence, read N- to C-terminus: Gap junction Cx32.7 protein (282 aa).

The Cytoplasmic portion of the chain corresponds to 2-13 (GEWDLLGRLLDK). The helical transmembrane segment at 14 to 36 (VQSHSTVIGKVWLTVLFVFRILV) threads the bilayer. The Extracellular portion of the chain corresponds to 37–76 (LRTGADRVWGDEQSDFVCNTQQPGCENVCYDLAFPISHVR). A helical membrane pass occupies residues 77–99 (FWFLQIIAVATPKLLYLGHVLHV). Topologically, residues 100–148 (IHAEKKMKERMKKQAELDDQTNLFLRKAYKVPKYTKSSGKISIRGRLLR) are cytoplasmic. A helical transmembrane segment spans residues 149–171 (SYVYHLVAKIILEVLFIVGQYFL). The Extracellular portion of the chain corresponds to 172 to 203 (YGFTLDTRYVCTRFPCPHKVDCFLSRPTEKSV). Residues 204-226 (IIWFMLVAAFVSLFLSLVELFYL) traverse the membrane as a helical segment. Residues 227–282 (CVKAAKECMARRQDYTVTPVTPPLLARKSFKSHKEVFQNCVNEPASPENNMEEVHI) lie on the Cytoplasmic side of the membrane.

The protein belongs to the connexin family. Alpha-type (group II) subfamily. As to quaternary structure, a connexon is composed of a hexamer of connexins. Expressed equally in incompetent and competent ovaries.

It localises to the cell membrane. Its subcellular location is the cell junction. It is found in the gap junction. One gap junction consists of a cluster of closely packed pairs of transmembrane channels, the connexons, through which materials of low MW diffuse from one cell to a neighboring cell. This Micropogonias undulatus (Atlantic croaker) protein is Gap junction Cx32.7 protein.